Here is a 371-residue protein sequence, read N- to C-terminus: tRNA-specific 2-thiouridylase MnmA (371 aa).

Residues Gly-16–Ser-23 and Met-42 contribute to the ATP site. Residues Asn-102 to Asp-104 are interaction with target base in tRNA. The active-site Nucleophile is the Cys-107. The cysteines at positions 107 and 204 are disulfide-linked. Residue Gly-132 coordinates ATP. Residues Lys-154–Gln-156 are interaction with tRNA. Cys-204 functions as the Cysteine persulfide intermediate in the catalytic mechanism. Positions Arg-316–Tyr-317 are interaction with tRNA.

This sequence belongs to the MnmA/TRMU family.

The protein localises to the cytoplasm. It catalyses the reaction S-sulfanyl-L-cysteinyl-[protein] + uridine(34) in tRNA + AH2 + ATP = 2-thiouridine(34) in tRNA + L-cysteinyl-[protein] + A + AMP + diphosphate + H(+). Catalyzes the 2-thiolation of uridine at the wobble position (U34) of tRNA, leading to the formation of s(2)U34. This chain is tRNA-specific 2-thiouridylase MnmA, found in Shewanella halifaxensis (strain HAW-EB4).